A 227-amino-acid chain; its full sequence is Urease accessory protein UreF (227 aa).

It belongs to the UreF family. UreD, UreF and UreG form a complex that acts as a GTP-hydrolysis-dependent molecular chaperone, activating the urease apoprotein by helping to assemble the nickel containing metallocenter of UreC. The UreE protein probably delivers the nickel.

It localises to the cytoplasm. Its function is as follows. Required for maturation of urease via the functional incorporation of the urease nickel metallocenter. This is Urease accessory protein UreF from Bacillus sp. (strain TB-90).